The chain runs to 310 residues: Methionyl-tRNA formyltransferase (310 aa).

Residue 112 to 115 (SLLP) participates in (6S)-5,6,7,8-tetrahydrofolate binding.

This sequence belongs to the Fmt family.

The enzyme catalyses L-methionyl-tRNA(fMet) + (6R)-10-formyltetrahydrofolate = N-formyl-L-methionyl-tRNA(fMet) + (6S)-5,6,7,8-tetrahydrofolate + H(+). Functionally, attaches a formyl group to the free amino group of methionyl-tRNA(fMet). The formyl group appears to play a dual role in the initiator identity of N-formylmethionyl-tRNA by promoting its recognition by IF2 and preventing the misappropriation of this tRNA by the elongation apparatus. The sequence is that of Methionyl-tRNA formyltransferase from Pelagibacter ubique (strain HTCC1062).